Here is a 142-residue protein sequence, read N- to C-terminus: Cell division protein SepF (142 aa).

This sequence belongs to the SepF family. In terms of assembly, homodimer. Interacts with FtsZ.

The protein localises to the cytoplasm. Functionally, cell division protein that is part of the divisome complex and is recruited early to the Z-ring. Probably stimulates Z-ring formation, perhaps through the cross-linking of FtsZ protofilaments. Its function overlaps with FtsA. This is Cell division protein SepF from Syntrophomonas wolfei subsp. wolfei (strain DSM 2245B / Goettingen).